We begin with the raw amino-acid sequence, 429 residues long: D-amino acid dehydrogenase 1 (429 aa).

Position 3–17 (3–17 (VLVLGSGVIGVTSAY)) interacts with FAD.

The protein belongs to the DadA oxidoreductase family. FAD serves as cofactor.

It carries out the reaction a D-alpha-amino acid + A + H2O = a 2-oxocarboxylate + AH2 + NH4(+). Oxidative deamination of D-amino acids. The sequence is that of D-amino acid dehydrogenase 1 (dadA1) from Ralstonia nicotianae (strain ATCC BAA-1114 / GMI1000) (Ralstonia solanacearum).